The following is a 201-amino-acid chain: UPF0301 protein Bpet0561 (201 aa).

Belongs to the UPF0301 (AlgH) family.

In Bordetella petrii (strain ATCC BAA-461 / DSM 12804 / CCUG 43448), this protein is UPF0301 protein Bpet0561.